Reading from the N-terminus, the 156-residue chain is Homeobox-leucine zipper protein ATHB-52 (156 aa).

The homeobox DNA-binding region spans 8–67; that stretch reads GKNKKKRLTQDQVRQLEKCFTMNKKLEPDLKLQLSNQLGLPQRQVAVWFQNKRARFKTQS. Residues 68–96 are leucine-zipper; that stretch reads LEVQHCTLQSKHEAALSDKAKLEHQVQFL.

Belongs to the HD-ZIP homeobox family. Class I subfamily. Expressed in roots and flowers.

It is found in the nucleus. Probable transcription factor. The polypeptide is Homeobox-leucine zipper protein ATHB-52 (ATHB-52) (Arabidopsis thaliana (Mouse-ear cress)).